A 372-amino-acid polypeptide reads, in one-letter code: Rab9 effector protein with kelch motifs (372 aa).

5 Kelch repeats span residues 49-95 (KVFI…FIPS), 100-146 (SIWV…TSSA), 151-203 (QLYV…AAGT), 204-250 (KLFI…SAVA), and 254-303 (HLYV…IIPW). The disordered stretch occupies residues 309–341 (SEKEDSNSATVNRDAEKGDSTEKGVTQGGDSQE). A compositionally biased stretch (basic and acidic residues) spans 321 to 330 (RDAEKGDSTE). The Kelch 6 repeat unit spans residues 349 to 372 (LCFVFGGMNTEGEIYDDCIVTAVD).

Interacts with PIKFYVE; the interaction recruits RABEPK to the endosomal membrane. Interacts with RAB9 in its GTP-bound conformation. Post-translationally, phosphorylated on Ser residues by PIKFYVE.

Its subcellular location is the cytoplasm. It localises to the endosome membrane. In terms of biological role, rab9 effector required for endosome to trans-Golgi network (TGN) transport. In Bos taurus (Bovine), this protein is Rab9 effector protein with kelch motifs (RABEPK).